The primary structure comprises 237 residues: Phosphoribosylaminoimidazole-succinocarboxamide synthase (237 aa).

The protein belongs to the SAICAR synthetase family.

The catalysed reaction is 5-amino-1-(5-phospho-D-ribosyl)imidazole-4-carboxylate + L-aspartate + ATP = (2S)-2-[5-amino-1-(5-phospho-beta-D-ribosyl)imidazole-4-carboxamido]succinate + ADP + phosphate + 2 H(+). The protein operates within purine metabolism; IMP biosynthesis via de novo pathway; 5-amino-1-(5-phospho-D-ribosyl)imidazole-4-carboxamide from 5-amino-1-(5-phospho-D-ribosyl)imidazole-4-carboxylate: step 1/2. The sequence is that of Phosphoribosylaminoimidazole-succinocarboxamide synthase from Shigella sonnei (strain Ss046).